The chain runs to 117 residues: uncharacterized protein (117 aa).

The helical transmembrane segment at 1 to 21 (MEIAIIALFIVSIALIAFSYS) threads the bilayer. The stretch at 38–67 (LSAMQEIYKLKKKMTVLEEELLETNLVIRK) forms a coiled coil.

It is found in the cell membrane. This is an uncharacterized protein from Bacillus subtilis (strain 168).